Reading from the N-terminus, the 525-residue chain is Frizzled-4 (525 aa).

The signal sequence occupies residues 1-24 (MERRGGGGRMLALLLAGLLGGARG). At 25 to 200 (FGDEEERRCD…KCGYDAGLYS (176 aa)) the chain is on the extracellular side. The 122-residue stretch at 28–149 (EEERRCDAIR…NDHNHMCMEG (122 aa)) folds into the FZ domain. Intrachain disulfides connect Cys-33/Cys-94, Cys-41/Cys-87, Cys-78/Cys-116, Cys-105/Cys-146, Cys-109/Cys-133, Cys-169/Cys-188, Cys-192/Cys-270, and Cys-290/Cys-365. N-linked (GlcNAc...) asparagine glycosylation is present at Asn-47. Asn-132 carries an N-linked (GlcNAc...) asparagine glycan. Residues 201–231 (RSAKEFTDIWMAVWASLCFISTAFTVLTFLI) form a helical membrane-spanning segment. Residues 232-237 (DSSRFS) are Cytoplasmic-facing. The chain crosses the membrane as a helical span at residues 238–263 (YPERPIIFLSMCYNIYSIAYIVRLTV). Topologically, residues 264 to 287 (GRERISCDFEEAAEPVLIQEGLKN) are extracellular. The chain crosses the membrane as a helical span at residues 288–321 (TGCAIIFLLMYFFGMASSIWWVILTLTWFLAAGL). Topologically, residues 322–324 (KWG) are cytoplasmic. The chain crosses the membrane as a helical span at residues 325–353 (HEAIEMHSSYFHIAAWAIPAVKTIVILIM). The Extracellular segment spans residues 354–371 (RLVDADELTGLCYVGNQN). The helical transmembrane segment at 372-406 (LDALTGFVVAPLFTYLVIGTLFIAAGLVALFKIRS) threads the bilayer. The Cytoplasmic segment spans residues 407 to 419 (NLQKDGTKTDKLE). The chain crosses the membrane as a helical span at residues 420-448 (RLMVKIGVFSVLYTVPATCVIACYFYEIS). At 449–461 (NWAVFRYSADDSN) the chain is on the extracellular side. Residues 462–483 (MAVEMLKIFMSLLVGITSGMWI) traverse the membrane as a helical segment. The Cytoplasmic portion of the chain corresponds to 484–525 (WSAKTLHTWQKCSNRLVNSGKVKREKRADGWVKPGKGNETVV). Positions 487–492 (KTLHTW) match the Lys-Thr-X-X-X-Trp motif, mediates interaction with the PDZ domain of Dvl family members motif. Residues 523–525 (TVV) carry the PDZ-binding motif.

This sequence belongs to the G-protein coupled receptor Fz/Smo family. In terms of assembly, interacts (via FZ domain) with TSKU; TSKU competes with WNT2B for binding to FZD4, inhibiting Wnt signaling and repressing peripheral eye development. Expressed in the developing kidney, interdigital spaces and optic cup.

The protein localises to the cell membrane. Its function is as follows. Receptor for Wnt proteins. Most frizzled receptors are coupled to the beta-catenin canonical signaling pathway, which leads to the activation of disheveled proteins, inhibition of GSK-3 kinase, nuclear accumulation of beta-catenin and activation of Wnt target genes. A second signaling pathway involving PKC and calcium fluxes has been seen for some family members, but it is not yet clear if it represents a distinct pathway or if it can be integrated in the canonical pathway, as PKC seems to be required for Wnt-mediated inactivation of GSK-3 kinase. Both pathways seem to involve interactions with G-proteins. May be involved in transduction and intercellular transmission of polarity information during tissue morphogenesis and/or in differentiated tissues. The sequence is that of Frizzled-4 (FZD4) from Gallus gallus (Chicken).